Consider the following 370-residue polypeptide: Cytochrome b (370 aa).

Transmembrane regions (helical) follow at residues 25–45, 69–90, 105–125, and 170–190; these read FGSM…FLAV, WLMQ…YIHI, WLSG…GYVL, and FFAL…LHVI. Heme b is bound by residues H75 and H89. Positions 174 and 188 each coordinate heme b. An a ubiquinone-binding site is contributed by H193. Helical transmembrane passes span 218-238, 280-300, 312-332, and 339-358; these read YKDL…VSFS, LGGA…PFTH, FMQM…WTAT, and FTLI…ISNP.

It belongs to the cytochrome b family. As to quaternary structure, the cytochrome bc1 complex contains 3 respiratory subunits (MT-CYB, CYC1 and UQCRFS1), 2 core proteins (UQCRC1 and UQCRC2) and probably 6 low-molecular weight proteins. Requires heme b as cofactor.

It is found in the mitochondrion inner membrane. Functionally, component of the ubiquinol-cytochrome c reductase complex (complex III or cytochrome b-c1 complex) that is part of the mitochondrial respiratory chain. The b-c1 complex mediates electron transfer from ubiquinol to cytochrome c. Contributes to the generation of a proton gradient across the mitochondrial membrane that is then used for ATP synthesis. This chain is Cytochrome b (MT-CYB), found in Eunectes murinus (Green anaconda).